Reading from the N-terminus, the 152-residue chain is Deoxyuridine 5'-triphosphate nucleotidohydrolase (152 aa).

Residues 71–73 (RSG), N84, 88–90 (LID), and M98 contribute to the substrate site.

Belongs to the dUTPase family. Mg(2+) serves as cofactor.

It carries out the reaction dUTP + H2O = dUMP + diphosphate + H(+). Its pathway is pyrimidine metabolism; dUMP biosynthesis; dUMP from dCTP (dUTP route): step 2/2. Functionally, this enzyme is involved in nucleotide metabolism: it produces dUMP, the immediate precursor of thymidine nucleotides and it decreases the intracellular concentration of dUTP so that uracil cannot be incorporated into DNA. This is Deoxyuridine 5'-triphosphate nucleotidohydrolase from Cronobacter sakazakii (strain ATCC BAA-894) (Enterobacter sakazakii).